The chain runs to 235 residues: Fibrillarin-like rRNA/tRNA 2'-O-methyltransferase (235 aa).

S-adenosyl-L-methionine-binding positions include Thr-91 to Thr-92, Glu-110 to Phe-111, Asp-137 to Ala-138, and Asp-157 to Gln-160.

It belongs to the methyltransferase superfamily. Fibrillarin family. In terms of assembly, interacts with nop5. Component of box C/D small ribonucleoprotein (sRNP) particles that contain rpl7ae, FlpA and nop5, plus a guide RNA.

Involved in pre-rRNA and tRNA processing. Utilizes the methyl donor S-adenosyl-L-methionine to catalyze the site-specific 2'-hydroxyl methylation of ribose moieties in rRNA and tRNA. Site specificity is provided by a guide RNA that base pairs with the substrate. Methylation occurs at a characteristic distance from the sequence involved in base pairing with the guide RNA. This chain is Fibrillarin-like rRNA/tRNA 2'-O-methyltransferase, found in Pyrobaculum neutrophilum (strain DSM 2338 / JCM 9278 / NBRC 100436 / V24Sta) (Thermoproteus neutrophilus).